The chain runs to 126 residues: Larval cuticle protein 2 (126 aa).

An N-terminal signal peptide occupies residues 1–16; that stretch reads MFKFVMILAVVGVATA. The Chitin-binding type R&amp;R domain maps to 39–100; the sequence is ADGFDSSLHT…PSGAWIPTPP (62 aa).

In terms of biological role, component of the larval cuticle. This chain is Larval cuticle protein 2 (Lcp2), found in Drosophila melanogaster (Fruit fly).